The sequence spans 413 residues: Glycosyl hydrolase family 109 protein 2 (413 aa).

NAD(+)-binding positions include asparagine 26–arginine 27, aspartate 48, tryptophan 96–histidine 99, glutamate 116–valine 117, and asparagine 145. Tyrosine 174 provides a ligand contact to substrate. Residues tyrosine 191–tryptophan 195 and tyrosine 208 each bind NAD(+). Substrate contacts are provided by residues tyrosine 208 to histidine 211 and tyrosine 290.

This sequence belongs to the Gfo/Idh/MocA family. Glycosyl hydrolase 109 subfamily. It depends on NAD(+) as a cofactor.

Its function is as follows. Glycosidase. This is Glycosyl hydrolase family 109 protein 2 from Phocaeicola vulgatus (strain ATCC 8482 / DSM 1447 / JCM 5826 / CCUG 4940 / NBRC 14291 / NCTC 11154) (Bacteroides vulgatus).